The sequence spans 331 residues: Putative ankyrin repeat protein RBE_0261 (331 aa).

The stretch at 94-159 (QGENVIHKCV…KAKNTLLNIV (66 aa)) is one ANK repeat.

The sequence is that of Putative ankyrin repeat protein RBE_0261 from Rickettsia bellii (strain RML369-C).